Reading from the N-terminus, the 336-residue chain is Holliday junction branch migration complex subunit RuvB (336 aa).

The interval 1-180 (MRRTGIRLSW…FGIVEHLEYY (180 aa)) is large ATPase domain (RuvB-L). Residues Leu18, Arg19, Gly60, Lys63, Thr64, Thr65, 127–129 (EDF), Arg170, Tyr180, and Arg217 contribute to the ATP site. Thr64 serves as a coordination point for Mg(2+). Residues 181–251 (TPEELAQGVM…RALEALAALG (71 aa)) form a small ATPAse domain (RuvB-S) region. Positions 254-336 (ELGLEKRDRE…PPPVGPLLEP (83 aa)) are head domain (RuvB-H). The DNA site is built by Arg309 and Arg314.

It belongs to the RuvB family. Homohexamer. Forms an RuvA(8)-RuvB(12)-Holliday junction (HJ) complex. HJ DNA is sandwiched between 2 RuvA tetramers; dsDNA enters through RuvA and exits via RuvB. An RuvB hexamer assembles on each DNA strand where it exits the tetramer. Each RuvB hexamer is contacted by two RuvA subunits (via domain III) on 2 adjacent RuvB subunits; this complex drives branch migration. In the full resolvosome a probable DNA-RuvA(4)-RuvB(12)-RuvC(2) complex forms which resolves the HJ.

It is found in the cytoplasm. The catalysed reaction is ATP + H2O = ADP + phosphate + H(+). Functionally, the RuvA-RuvB-RuvC complex processes Holliday junction (HJ) DNA during genetic recombination and DNA repair, while the RuvA-RuvB complex plays an important role in the rescue of blocked DNA replication forks via replication fork reversal (RFR). RuvA specifically binds to HJ cruciform DNA, conferring on it an open structure. The RuvB hexamer acts as an ATP-dependent pump, pulling dsDNA into and through the RuvAB complex. RuvB forms 2 homohexamers on either side of HJ DNA bound by 1 or 2 RuvA tetramers; 4 subunits per hexamer contact DNA at a time. Coordinated motions by a converter formed by DNA-disengaged RuvB subunits stimulates ATP hydrolysis and nucleotide exchange. Immobilization of the converter enables RuvB to convert the ATP-contained energy into a lever motion, pulling 2 nucleotides of DNA out of the RuvA tetramer per ATP hydrolyzed, thus driving DNA branch migration. The RuvB motors rotate together with the DNA substrate, which together with the progressing nucleotide cycle form the mechanistic basis for DNA recombination by continuous HJ branch migration. Branch migration allows RuvC to scan DNA until it finds its consensus sequence, where it cleaves and resolves cruciform DNA. The protein is Holliday junction branch migration complex subunit RuvB of Thermus thermophilus (strain ATCC BAA-163 / DSM 7039 / HB27).